We begin with the raw amino-acid sequence, 392 residues long: Bifunctional enzyme Fae/Hps (392 aa).

The tract at residues Met1–Ile161 is formaldehyde-activating enzyme. The active-site Proton donor is the His17. Substrate-binding residues include Asp19, Leu48, Lys66, Thr68, and Gln83. The tract at residues Met162–Phe392 is 3-hexulose-6-phosphate synthase.

The protein in the N-terminal section; belongs to the formaldehyde-activating enzyme family. This sequence in the C-terminal section; belongs to the HPS/KGPDC family. HPS subfamily.

It catalyses the reaction 5,6,7,8-tetrahydromethanopterin + formaldehyde = 5,10-methylenetetrahydromethanopterin + H2O. The enzyme catalyses D-ribulose 5-phosphate + formaldehyde = D-arabino-hex-3-ulose 6-phosphate. Its pathway is carbohydrate biosynthesis; D-ribose 5-phosphate biosynthesis. Functionally, catalyzes the condensation of formaldehyde with tetrahydromethanopterin (H(4)MPT) to 5,10-methylenetetrahydromethanopterin. In terms of biological role, catalyzes the reversible formation of ribulose-5-phosphate and formaldehyde from 3-hexulose-6-phosphate. In Methanosarcina barkeri (strain Fusaro / DSM 804), this protein is Bifunctional enzyme Fae/Hps.